The chain runs to 316 residues: Aspartate carbamoyltransferase catalytic subunit (316 aa).

Residues R66 and T67 each coordinate carbamoyl phosphate. Position 94 (K94) interacts with L-aspartate. The carbamoyl phosphate site is built by R116, H146, and Q149. 2 residues coordinate L-aspartate: R180 and R235. Carbamoyl phosphate contacts are provided by G276 and P277.

The protein belongs to the aspartate/ornithine carbamoyltransferase superfamily. ATCase family. As to quaternary structure, heterododecamer (2C3:3R2) of six catalytic PyrB chains organized as two trimers (C3), and six regulatory PyrI chains organized as three dimers (R2).

It catalyses the reaction carbamoyl phosphate + L-aspartate = N-carbamoyl-L-aspartate + phosphate + H(+). It participates in pyrimidine metabolism; UMP biosynthesis via de novo pathway; (S)-dihydroorotate from bicarbonate: step 2/3. In terms of biological role, catalyzes the condensation of carbamoyl phosphate and aspartate to form carbamoyl aspartate and inorganic phosphate, the committed step in the de novo pyrimidine nucleotide biosynthesis pathway. In Stenotrophomonas maltophilia (strain R551-3), this protein is Aspartate carbamoyltransferase catalytic subunit.